The chain runs to 136 residues: Protein BUNDLE SHEATH DEFECTIVE 2, chloroplastic (136 aa).

Residues 1-56 (MANSLCFFSSPPTFCFQSPSKNPKPSHFFSTNDNTSSLVQKRELLQTSRSQSFEVK) constitute a chloroplast transit peptide. The CR-type zinc-finger motif lies at 62 to 133 (PQGTKPNSLV…AGFIGGFLST (72 aa)). Zn(2+) contacts are provided by cysteine 72, cysteine 75, glutamate 78, cysteine 80, cysteine 83, cysteine 86, cysteine 107, cysteine 110, glutamate 115, cysteine 118, and cysteine 121.

Belongs to the BSD2 chaperone family. Interacts with the RuBisCo large subunit (RbcL) assembled as an intermediate complex made of eight RbcL and eight BSD2 subunits.

It is found in the plastid. The protein resides in the chloroplast stroma. In terms of biological role, chloroplast chaperone required for RuBisCo biogenesis and translational regulation of the RuBisCo large subunit (RbcL). Stabilizes an end-state assembly intermediate of eight RbcL subunits until the small subunits (RBCSs) become available to produce a complete stable RuBisCo complex containing eight small and eight large subunits. The protein is Protein BUNDLE SHEATH DEFECTIVE 2, chloroplastic of Arabidopsis thaliana (Mouse-ear cress).